The sequence spans 339 residues: Probable thylakoid lumen protein sll0997 (339 aa).

Residues 1 to 26 (MAPYQSFHIGLLGLALASVWPLSACA) form the signal peptide.

The protein localises to the cellular thylakoid lumen. The sequence is that of Probable thylakoid lumen protein sll0997 from Synechocystis sp. (strain ATCC 27184 / PCC 6803 / Kazusa).